Reading from the N-terminus, the 363-residue chain is MDQIVNVDEFQELAKQALPKMYYDFYNGGAEDQHTLNENVQAFRRIMFRPRVLVDVSKIDMSTKILGYPISAPIMIAPTGNHKLAHPEGETATAKAAAACNTIMIVSYMSSCTFEEIASSCNAVRFLQIYVYKRRDITAQVVKRAEKAGFKAIVLTVDVPRLGRREADIKNKMISPQLKNFEGLFSTEVRPSKGSGVQAFASRAFDASFSWKDIEWLRSITELPILVKGILTREDALKAVEAGVDGIIVSNHGGRQLDYSPATITVLEEVVQVVRGRIPVLLDGGVRRGTDVFKALALGAQAVLIGRPIIYGLAAKGEDGVKKVIDMLKNEFEITMALSGCPTIDDITRNHVRTENERLHSML.

The FMN hydroxy acid dehydrogenase domain occupies 1–357; it reads MDQIVNVDEF…TRNHVRTENE (357 aa). FMN is bound by residues 78 to 80, S107, 128 to 130, and T156; these read PTG and QIY. Y130 provides a ligand contact to a 2-oxocarboxylate. Residue R165 coordinates a 2-oxocarboxylate. FMN is bound by residues K228 and S250. H252 acts as the Proton acceptor in catalysis. Residue R255 coordinates a 2-oxocarboxylate. Residues 283–287 and 306–307 contribute to the FMN site; these read DGGVR and GR. The Microbody targeting signal signature appears at 361 to 363; the sequence is SML.

The protein belongs to the FMN-dependent alpha-hydroxy acid dehydrogenase family. As to quaternary structure, homotetramer. It depends on FMN as a cofactor.

Its subcellular location is the peroxisome. It catalyses the reaction a (2S)-2-hydroxycarboxylate + O2 = a 2-oxocarboxylate + H2O2. The enzyme catalyses 2-hydroxy-4-methylpentanoate + O2 = 4-methyl-2-oxopentanoate + H2O2. The catalysed reaction is 2-hydroxyhexanoate + O2 = 2-oxohexanoate + H2O2. It carries out the reaction 2-hydroxyoctanoate + O2 = 2-oxooctanoate + H2O2. In terms of biological role, oxidase that catalyzes the oxidation of a broad range of 2-hydroxyacids to the corresponding 2-oxoacids, with a reduction of O2 to H2O2. Displays the highest activity with leucic acid (2-hydroxy-4-methylpentanoate) and has intermediate activity with 2-hydroxyhexanoate and 2-hydroxyoctanote. Shows lower activity with 2-hydroxydodecanoate, valic acid, and isoleucic acid and extremely low activity with glycolate and L-lactate. Cannot use 2-hydroxyhexadecanoate or D-lactate as substrates. May be involved in the conversion or degradation of 2-hydroxyacids produced during the metabolism of fatty acids or amino acids. The polypeptide is Peroxisomal (S)-2-hydroxyacid oxidase GLO3 (GLO3) (Arabidopsis thaliana (Mouse-ear cress)).